Consider the following 111-residue polypeptide: MKENKIRKNKEFRHVYRRGKSYSNRLLVLYICKNRCNINRLGVSVSKKVGKSVIRNRVKRLIKESYRLNLDENMKKGYDLVFIARNSSNDRDYKDIESALINLLKKAGIYN.

Belongs to the RnpA family. Consists of a catalytic RNA component (M1 or rnpB) and a protein subunit.

It catalyses the reaction Endonucleolytic cleavage of RNA, removing 5'-extranucleotides from tRNA precursor.. Functionally, RNaseP catalyzes the removal of the 5'-leader sequence from pre-tRNA to produce the mature 5'-terminus. It can also cleave other RNA substrates such as 4.5S RNA. The protein component plays an auxiliary but essential role in vivo by binding to the 5'-leader sequence and broadening the substrate specificity of the ribozyme. The chain is Ribonuclease P protein component from Clostridium botulinum (strain Okra / Type B1).